Reading from the N-terminus, the 163-residue chain is Transcription antitermination protein NusB (163 aa).

It belongs to the NusB family.

Involved in transcription antitermination. Required for transcription of ribosomal RNA (rRNA) genes. Binds specifically to the boxA antiterminator sequence of the ribosomal RNA (rrn) operons. This chain is Transcription antitermination protein NusB, found in Chlorobium luteolum (strain DSM 273 / BCRC 81028 / 2530) (Pelodictyon luteolum).